Here is a 280-residue protein sequence, read N- to C-terminus: Myb family transcription factor PHL11 (280 aa).

Residues 20–80 (RDPKPRLRWT…HLQKYRLGQQ (61 aa)) form the HTH myb-type domain. Residues 51 to 76 (PKSVLKLMGLKGLTLYHLKSHLQKYR) constitute a DNA-binding region (H-T-H motif). Residues 77-98 (LGQQQGKKQNRTEQNKENAGSS) are disordered. The coiled coil stretch occupies residues 129–149 (AEAMRHQVDAQQRFQEQLEVQ). The LHEQLE motif lies at 142–147 (FQEQLE).

The protein belongs to the MYB-CC family.

It localises to the nucleus. This Arabidopsis thaliana (Mouse-ear cress) protein is Myb family transcription factor PHL11.